The sequence spans 349 residues: MNTLAPRLTDLAHGGGCGCKLAPSVLQQLLANQPAARPFAQLLVGNDMADDAAVWQVDDNTCVIATTDFFMPIVDDPRDFGRIAATNAISDVYAMGGKPILALAIVGMPINKLDSTTIAKILEGGASICAEAGIPVAGGHSIDSVEPIYGLAVIGLCHPSEVRRNGGVKAGDALILTKGIGVGIYSAAIKKNALPPGCYEEMIGSTTLLNRIGADLAADPDVHALTDVTGFGVLGHGLEMARASQLSLTLRLSAIPFLSQAYMLAEQGFITGASGRNWASYGADVVLPDDLPDWQRLLLADPQTSGGLLVACAPEKAGALVEKVRLAGYPLAGIVGTAAAGAAQIKVIS.

C17 is a catalytic residue. ATP is bound by residues K20 and 48-50 (MAD). D51 provides a ligand contact to Mg(2+). ATP is bound by residues D68, D91, and 139–141 (GHS). D91 contributes to the Mg(2+) binding site. D227 serves as a coordination point for Mg(2+).

The protein belongs to the selenophosphate synthase 1 family. Class I subfamily. As to quaternary structure, homodimer. The cofactor is Mg(2+).

It catalyses the reaction hydrogenselenide + ATP + H2O = selenophosphate + AMP + phosphate + 2 H(+). Its function is as follows. Synthesizes selenophosphate from selenide and ATP. In Rhizobium meliloti (strain 1021) (Ensifer meliloti), this protein is Selenide, water dikinase.